Consider the following 387-residue polypeptide: Patatin-12 (387 aa).

A signal peptide spans 1–23; sequence MATTKSFLILIVMILATTSSTFA. A PNPLA domain is found at 32–230; the sequence is LSIDGGGIKG…TVGDPALLSL (199 aa). The GXGXXG signature appears at 36-41; the sequence is GGGIKG. Positions 75–79 match the GXSXG motif; that stretch reads GTSTG. Ser-77 functions as the Nucleophile in the catalytic mechanism. Asn-115 carries an N-linked (GlcNAc...) asparagine glycan. The active-site Proton acceptor is the Asp-216. The DGA/G motif lies at 216-218; that stretch reads DGG. Residues 322–385 are a coiled coil; the sequence is ENALTGTTTE…DRKKLRANKA (64 aa).

It belongs to the patatin family. Tuber.

It is found in the vacuole. Probable lipolytic acyl hydrolase (LAH), an activity which is thought to be involved in the response of tubers to pathogens. This is Patatin-12 from Solanum tuberosum (Potato).